Consider the following 208-residue polypeptide: Calcyphosin-like protein (208 aa).

EF-hand domains lie at 39–74 (AGIKGLGRVFRIMDDNNNRTLDFKEFLKGLNDYAVV), 75–110 (MEKEEAEELFQRFDRDGSGTIDFNEFLLTLRPPMSR), 111–146 (ARKEVIMKAFRKLDKTGDGVITIEDLREVYNAKHHP), and 154–191 (TEEQVFRKFLDNFDSPYDKDGLVTPEEFMNYYAGVSAS). Ca(2+)-binding residues include Asp52, Asn54, Asn56, Thr58, Glu63, Asp88, Asp90, Ser92, Thr94, and Glu99.

The protein resides in the cytoplasm. The chain is Calcyphosin-like protein (Capsl) from Mus musculus (Mouse).